Here is a 277-residue protein sequence, read N- to C-terminus: Large ribosomal subunit protein uL2 (277 aa).

Residues 222–259 are disordered; that stretch reads GSVMNPNDHPHGGGEGKSPVGRPSPVTPWGKPALGYKT.

The protein belongs to the universal ribosomal protein uL2 family. As to quaternary structure, part of the 50S ribosomal subunit. Forms a bridge to the 30S subunit in the 70S ribosome.

In terms of biological role, one of the primary rRNA binding proteins. Required for association of the 30S and 50S subunits to form the 70S ribosome, for tRNA binding and peptide bond formation. It has been suggested to have peptidyltransferase activity; this is somewhat controversial. Makes several contacts with the 16S rRNA in the 70S ribosome. The chain is Large ribosomal subunit protein uL2 from Clostridium beijerinckii (strain ATCC 51743 / NCIMB 8052) (Clostridium acetobutylicum).